We begin with the raw amino-acid sequence, 233 residues long: MFQPAGKRCFTIESLVAKDNPLSSEEPLRPAALPYPGAPAEAFVSGFPSPAGRSLYNNPELVFPETVSHPPLTVHPHQLGASHLQHPHSFFAPQHRDPLNFYPWVLRNRFFGHRFQGGDVSQESLLLHGPFARKPKRIRTAFSPSQLLRLERAFEKNHYVVGAERKQLASSLSLSETQVKVWFQNRRTKYKRQKLEEEGPDSDQKKKGSHHINRWRLATKQPNGEDIDVTSND.

Positions proline 135–lysine 194 form a DNA-binding region, homeobox. Residues arginine 192–aspartate 233 form a disordered region. The segment covering glutamine 193–lysine 206 has biased composition (basic and acidic residues).

It belongs to the EMX homeobox family.

Its subcellular location is the nucleus. Functionally, may function in combinations with OTX1/2 to specify cell fates in the developing central nervous system. The protein is Homeobox protein EMX1 (emx1) of Xenopus tropicalis (Western clawed frog).